Reading from the N-terminus, the 363-residue chain is Glyceraldehyde-3-phosphate dehydrogenase, muscle (363 aa).

Positions 1–176 (MVKVGVNGFG…KYDKSLKIVS (176 aa)) are interaction with WARS. K3 is modified (N6,N6-dimethyllysine). N7 carries the post-translational modification Deamidated asparagine. NAD(+) is bound by residues 11–12 (RI) and D33. Y70 is modified (phosphotyrosine). K89 is subject to N6-acetyllysine. N92 is modified (deamidated asparagine). K94 is subject to N6,N6-dimethyllysine. A Deamidated asparagine modification is found at N98. T103 bears the Phosphothreonine mark. Residues R108 and S150 each contribute to the NAD(+) site. S150 and S176 each carry phosphoserine. Residue N177 is modified to Deamidated asparagine. Residue S179 is modified to Phosphoserine. Position 179 to 181 (179 to 181 (SCT)) interacts with D-glyceraldehyde 3-phosphate. C180 serves as the catalytic Nucleophile. At C180 the chain carries ADP-ribosylcysteine; by autocatalysis; in irreversibly inhibited form. Position 180 is a cysteine persulfide (C180). C180 carries the post-translational modification S-(2-succinyl)cysteine. The residue at position 180 (C180) is an S-nitrosocysteine; in reversibly inhibited form. The residue at position 181 (T181) is a Phosphothreonine. At N183 the chain carries Deamidated asparagine. Phosphothreonine is present on residues T205, T210, and T212. T210 is a D-glyceraldehyde 3-phosphate binding site. K214 participates in a covalent cross-link: Glycyl lysine isopeptide (Lys-Gly) (interchain with G-Cter in SUMO2). Position 222 is an N6,N6-dimethyllysine; alternate (K222). Position 222 is an N6-acetyllysine; alternate (K222). An N6-malonyllysine; alternate modification is found at K222. T239 carries the post-translational modification Phosphothreonine. 239 to 240 (TG) is a D-glyceraldehyde 3-phosphate binding site. An N6,N6-dimethyllysine; alternate modification is found at K243. K243 carries the post-translational modification N6-malonyllysine; alternate. An N6-acetyllysine modification is found at K247. N253 is modified (deamidated asparagine). Position 255 is an N6,N6-dimethyllysine; alternate (K255). K255 is subject to N6-acetyllysine; alternate. T257 carries the post-translational modification Phosphothreonine. R262 provides a ligand contact to D-glyceraldehyde 3-phosphate. The residue at position 265 (T265) is a Phosphothreonine. S269 bears the Phosphoserine mark. S-(2-succinyl)cysteine is present on C275. C275 carries the post-translational modification S-nitrosocysteine. K282 bears the N6-acetyllysine mark. N6,N6-dimethyllysine is present on K291. S340 carries the phosphoserine modification. N344 carries the deamidated asparagine modification. NAD(+) is bound at residue N344. S361 is modified (phosphoserine). K362 carries the N6,N6-dimethyllysine modification.

It belongs to the glyceraldehyde-3-phosphate dehydrogenase family. Homotetramer. Interacts with TPPP; the interaction is direct. Interacts (when S-nitrosylated) with SIAH1; leading to nuclear translocation. Interacts with RILPL1/GOSPEL, leading to prevent the interaction between GAPDH and SIAH1 and prevent nuclear translocation. Interacts with CHP1; the interaction increases the binding of CHP1 with microtubules. Associates with microtubules. Interacts with EIF1AD, USP25, PRKCI and WARS1. Interacts with phosphorylated RPL13A; inhibited by oxidatively-modified low-densitity lipoprotein (LDL(ox)). Component of the GAIT complex. Interacts with FKBP6; leading to inhibit GAPDH catalytic activity. Interacts with TRAF2, promoting TRAF2 ubiquitination. Interacts with TRAF3, promoting TRAF3 ubiquitination. In terms of processing, ISGylated. Post-translationally, S-nitrosylation of Cys-180 leads to interaction with SIAH1, followed by translocation to the nucleus S-nitrosylation of Cys-275 is induced by interferon-gamma and LDL(ox) implicating the iNOS-S100A8/9 transnitrosylase complex and seems to prevent interaction with phosphorylated RPL13A and to interfere with GAIT complex activity. Sulfhydration at Cys-180 increases catalytic activity.

Its subcellular location is the cytoplasm. The protein resides in the cytosol. It localises to the cytoskeleton. It is found in the nucleus. The catalysed reaction is D-glyceraldehyde 3-phosphate + phosphate + NAD(+) = (2R)-3-phospho-glyceroyl phosphate + NADH + H(+). The enzyme catalyses S-nitroso-L-cysteinyl-[GAPDH] + L-cysteinyl-[protein] = L-cysteinyl-[GAPDH] + S-nitroso-L-cysteinyl-[protein]. The protein operates within carbohydrate degradation; glycolysis; pyruvate from D-glyceraldehyde 3-phosphate: step 1/5. With respect to regulation, glyceraldehyde-3-phosphate dehydrogenase activity is inhibited by fumarate, via the formation of S-(2-succinyl)cysteine residues. In terms of biological role, has both glyceraldehyde-3-phosphate dehydrogenase and nitrosylase activities, thereby playing a role in glycolysis and nuclear functions, respectively. Glyceraldehyde-3-phosphate dehydrogenase is a key enzyme in glycolysis that catalyzes the first step of the pathway by converting D-glyceraldehyde 3-phosphate (G3P) into 3-phospho-D-glyceroyl phosphate. Modulates the organization and assembly of the cytoskeleton. Facilitates the CHP1-dependent microtubule and membrane associations through its ability to stimulate the binding of CHP1 to microtubules. Component of the GAIT (gamma interferon-activated inhibitor of translation) complex which mediates interferon-gamma-induced transcript-selective translation inhibition in inflammation processes. Upon interferon-gamma treatment assembles into the GAIT complex which binds to stem loop-containing GAIT elements in the 3'-UTR of diverse inflammatory mRNAs (such as ceruplasmin) and suppresses their translation. Also plays a role in innate immunity by promoting TNF-induced NF-kappa-B activation and type I interferon production, via interaction with TRAF2 and TRAF3, respectively. Participates in nuclear events including transcription, RNA transport, DNA replication and apoptosis. Nuclear functions are probably due to the nitrosylase activity that mediates cysteine S-nitrosylation of nuclear target proteins such as SIRT1, HDAC2 and PRKDC. This is Glyceraldehyde-3-phosphate dehydrogenase, muscle from Jaculus orientalis (Greater Egyptian jerboa).